Consider the following 313-residue polypeptide: METANYTKVTEFVLTGLSQTPEVQLVLFVIFLSFYLFILPGNILIICTISLDPHLTSPMYFLLANLAFLDIWYSSITAPEMLIDFFVERKIISFDECIAQLFFLHFAGASEMFLLTVMAFDLYTAICRPLHYATIMNQRLCCILVALSWRGGFIHSIIQVALIVRLPFCGPNELDSYFCDITQVVRIACANTFPEELVMICSSGLISVVCLIALLMSYAFLLALLKKLSGSGENTNRAVSTCYSHITIVVLMFGPSIYIYARPFDSFSLDKVVSVFNTLIFPLHNPIIYTLRNKEVKAAMRKLVTKYILCKEK.

Residues 1 to 25 (METANYTKVTEFVLTGLSQTPEVQL) are Cytoplasmic-facing. The chain crosses the membrane as a helical span at residues 26–46 (VLFVIFLSFYLFILPGNILII). Topologically, residues 47–57 (CTISLDPHLTS) are extracellular. The chain crosses the membrane as a helical span at residues 58 to 78 (PMYFLLANLAFLDIWYSSITA). Residues 79 to 97 (PEMLIDFFVERKIISFDEC) are Cytoplasmic-facing. A disulfide bridge connects residues C97 and C179. Residues 98–118 (IAQLFFLHFAGASEMFLLTVM) traverse the membrane as a helical segment. Over 119 to 142 (AFDLYTAICRPLHYATIMNQRLCC) the chain is Extracellular. A helical membrane pass occupies residues 143 to 163 (ILVALSWRGGFIHSIIQVALI). Residues 164–204 (VRLPFCGPNELDSYFCDITQVVRIACANTFPEELVMICSSG) are Cytoplasmic-facing. Residues 205–225 (LISVVCLIALLMSYAFLLALL) form a helical membrane-spanning segment. The Extracellular segment spans residues 226–238 (KKLSGSGENTNRA). Residues 239–259 (VSTCYSHITIVVLMFGPSIYI) traverse the membrane as a helical segment. The Cytoplasmic segment spans residues 260–270 (YARPFDSFSLD). Residues 271–291 (KVVSVFNTLIFPLHNPIIYTL) form a helical membrane-spanning segment. The Extracellular segment spans residues 292–313 (RNKEVKAAMRKLVTKYILCKEK).

This sequence belongs to the G-protein coupled receptor 1 family.

It localises to the membrane. Its function is as follows. Odorant receptor. In Homo sapiens (Human), this protein is Olfactory receptor 4M2.